We begin with the raw amino-acid sequence, 350 residues long: Chorismate synthase (350 aa).

Residues R39 and R45 each contribute to the NADP(+) site. Residues 119–121, 213–214, G258, 273–277, and R299 contribute to the FMN site; these read RSS, QA, and KPIPT.

It belongs to the chorismate synthase family. In terms of assembly, homotetramer. The cofactor is FMNH2.

The catalysed reaction is 5-O-(1-carboxyvinyl)-3-phosphoshikimate = chorismate + phosphate. The protein operates within metabolic intermediate biosynthesis; chorismate biosynthesis; chorismate from D-erythrose 4-phosphate and phosphoenolpyruvate: step 7/7. Its function is as follows. Catalyzes the anti-1,4-elimination of the C-3 phosphate and the C-6 proR hydrogen from 5-enolpyruvylshikimate-3-phosphate (EPSP) to yield chorismate, which is the branch point compound that serves as the starting substrate for the three terminal pathways of aromatic amino acid biosynthesis. This reaction introduces a second double bond into the aromatic ring system. This Thermoanaerobacter pseudethanolicus (strain ATCC 33223 / 39E) (Clostridium thermohydrosulfuricum) protein is Chorismate synthase.